Consider the following 242-residue polypeptide: 3-oxoacyl-[acyl-carrier-protein] reductase FabG (242 aa).

Residues 9 to 12, R34, 60 to 61, and N87 each bind NADP(+); these read GSSR and DV. S140 contributes to the substrate binding site. Y153 serves as the catalytic Proton acceptor. NADP(+) contacts are provided by residues 153-157 and I186; that span reads YSASK.

This sequence belongs to the short-chain dehydrogenases/reductases (SDR) family. Homotetramer.

The enzyme catalyses a (3R)-hydroxyacyl-[ACP] + NADP(+) = a 3-oxoacyl-[ACP] + NADPH + H(+). Its pathway is lipid metabolism; fatty acid biosynthesis. Functionally, catalyzes the NADPH-dependent reduction of beta-ketoacyl-ACP substrates to beta-hydroxyacyl-ACP products, the first reductive step in the elongation cycle of fatty acid biosynthesis. This Aggregatibacter actinomycetemcomitans (Actinobacillus actinomycetemcomitans) protein is 3-oxoacyl-[acyl-carrier-protein] reductase FabG (fabG).